A 243-amino-acid polypeptide reads, in one-letter code: Probable transcriptional regulatory protein BH0025 (243 aa).

It belongs to the TACO1 family.

The protein resides in the cytoplasm. The polypeptide is Probable transcriptional regulatory protein BH0025 (Borrelia hermsii (strain HS1 / DAH)).